We begin with the raw amino-acid sequence, 105 residues long: Large ribosomal subunit protein eL36 (105 aa).

The disordered stretch occupies residues 9 to 31 (VGLNKGHKVTKNVSKPRHSRRRR). Positions 13–31 (KGHKVTKNVSKPRHSRRRR) are enriched in basic residues. Lys-62 carries the N6-acetyllysine modification.

This sequence belongs to the eukaryotic ribosomal protein eL36 family. Component of the large ribosomal subunit.

The protein resides in the cytoplasm. It localises to the cytosol. In terms of biological role, component of the large ribosomal subunit. The ribosome is a large ribonucleoprotein complex responsible for the synthesis of proteins in the cell. In Oryctolagus cuniculus (Rabbit), this protein is Large ribosomal subunit protein eL36 (RPL36).